The primary structure comprises 719 residues: Endonuclease MutS2 (719 aa).

273–280 (GPNTGGKT) is an ATP binding site. The Smr domain maps to 644-719 (LDLRGYRYED…GFGVTVATLK (76 aa)).

The protein belongs to the DNA mismatch repair MutS family. MutS2 subfamily. As to quaternary structure, homodimer. Binds to stalled ribosomes, contacting rRNA.

In terms of biological role, endonuclease that is involved in the suppression of homologous recombination and thus may have a key role in the control of bacterial genetic diversity. Functionally, acts as a ribosome collision sensor, splitting the ribosome into its 2 subunits. Detects stalled/collided 70S ribosomes which it binds and splits by an ATP-hydrolysis driven conformational change. Acts upstream of the ribosome quality control system (RQC), a ribosome-associated complex that mediates the extraction of incompletely synthesized nascent chains from stalled ribosomes and their subsequent degradation. Probably generates substrates for RQC. The chain is Endonuclease MutS2 from Staphylococcus aureus.